Consider the following 128-residue polypeptide: MGIQGGSVLFGLLLVLAVFCHSGNSLQCYSCPYPTTQCTMTTNCTSNLDSCLIAKAGSRVYYRCWKFEDCTFSRVSNQLSENELKYYCCKKNLCNFNEALKNGGTTLSKKTVLLLVIPFLVAAWSLHP.

Positions 1-25 (MGIQGGSVLFGLLLVLAVFCHSGNS) are cleaved as a signal peptide. In terms of domain architecture, UPAR/Ly6 spans 26–108 (LQCYSCPYPT…ALKNGGTTLS (83 aa)). Intrachain disulfides connect Cys28/Cys51, Cys31/Cys38, Cys44/Cys64, Cys70/Cys88, and Cys89/Cys94. A glycan (N-linked (GlcNAc...) asparagine) is linked at Asn43. Asn102 carries GPI-anchor amidated asparagine lipidation. A propeptide spans 103 to 128 (GGTTLSKKTVLLLVIPFLVAAWSLHP) (removed in mature form).

Interacts with T-cell surface antigen CD2. N- and O-glycosylated.

The protein resides in the cell membrane. It is found in the secreted. Potent inhibitor of the complement membrane attack complex (MAC) action, which protects self-cells from damage during complement activation. Acts by binding to the beta-haipins of C8 (C8A and C8B) components of the assembling MAC, forming an intermolecular beta-sheet that prevents incorporation of the multiple copies of C9 required for complete formation of the osmolytic pore. This is CD59 glycoprotein from Aotus trivirgatus (Three-striped night monkey).